Consider the following 182-residue polypeptide: Ribosome-recycling factor (182 aa).

Residues 136-156 are disordered; that stretch reads VKKQEKDGDFSEDQSRDEQDS.

It belongs to the RRF family.

The protein localises to the cytoplasm. Functionally, responsible for the release of ribosomes from messenger RNA at the termination of protein biosynthesis. May increase the efficiency of translation by recycling ribosomes from one round of translation to another. The chain is Ribosome-recycling factor from Synechococcus sp. (strain CC9902).